The sequence spans 488 residues: Facilitated trehalose transporter Tret1-2 homolog (488 aa).

At 1–28 (MKILMRADTHVSYSVPAEGTKANFTFSQ) the chain is on the cytoplasmic side. The chain crosses the membrane as a helical span at residues 29–49 (VLAALSVSLCSLVVGFVSAYT). Topologically, residues 50–72 (SPALVSMTDRTITSFEVTKDAGS) are extracellular. A helical transmembrane segment spans residues 73–93 (WVGGIMPLAALAGGITGGPLI). Residues 94 to 105 (EYLGRRNTILAT) are Cytoplasmic-facing. The chain crosses the membrane as a helical span at residues 106 to 126 (AVPFIVSSLLIACAVNVIMIL). At 127–129 (CGR) the chain is on the extracellular side. The chain crosses the membrane as a helical span at residues 130–150 (FLTGFCVGIASLSLPVYLGET). The Cytoplasmic portion of the chain corresponds to 151 to 160 (LQPEVRGTLG). Residues 161 to 181 (LLPTALGNIGILVCYVAGSFM) form a helical membrane-spanning segment. Asn-182 carries N-linked (GlcNAc...) asparagine glycosylation. The Extracellular segment spans residues 182–184 (NWS). Residues 185-205 (ILAFLGAALPVPFLILMIIIP) form a helical membrane-spanning segment. Topologically, residues 206–268 (ETPRWFVNRG…ELFKRINLKP (63 aa)) are cytoplasmic. A helical membrane pass occupies residues 269-289 (LSISLGLMFFQQFSGINAVIF). Topologically, residues 290–305 (YTVQIFKDAGSTIDSN) are extracellular. A helical transmembrane segment spans residues 306-326 (LCTIIVGIVNFFATFMGIILI). Residues 327–332 (DRLGRK) are Cytoplasmic-facing. The helical transmembrane segment at 333-353 (ILLYVSDIAMILTLSILGGFF) threads the bilayer. At 354–372 (YCKAHGPDVSHLGWLPLSC) the chain is on the extracellular side. Residues 373-393 (FVIYILGFSLGFGPIPWLMMG) form a helical membrane-spanning segment. Over 394 to 402 (EILPAKIRG) the chain is Cytoplasmic. Residues 403–423 (PAASVVTAFNWFCTFVVTKTF) form a helical membrane-spanning segment. The Extracellular portion of the chain corresponds to 424–433 (QDLTVAMGPH). The chain crosses the membrane as a helical span at residues 434 to 454 (GAFWLFGVVCIVGLFFVIIYV). The Cytoplasmic segment spans residues 455-488 (PETRGKSLEEIERKMMGRVPISAVVNIKPFSFNM).

It belongs to the major facilitator superfamily. Sugar transporter (TC 2.A.1.1) family. Trehalose transporter subfamily.

It is found in the cell membrane. Its function is as follows. Fails to transport trehalose. The sequence is that of Facilitated trehalose transporter Tret1-2 homolog from Drosophila sechellia (Fruit fly).